Reading from the N-terminus, the 197-residue chain is Large ribosomal subunit protein bL17 (197 aa).

A disordered region spans residues 120–197 (DVPPADTGQG…EEEESEEDNT (78 aa)). Over residues 127–136 (GQGGSGGTRR) the composition is skewed to gly residues. Acidic residues predominate over residues 159–197 (SSDEESESVEEDEATAEEASADAEQGEAEEEEESEEDNT).

The protein belongs to the bacterial ribosomal protein bL17 family. In terms of assembly, part of the 50S ribosomal subunit. Contacts protein L32.

This is Large ribosomal subunit protein bL17 from Salinibacter ruber (strain DSM 13855 / M31).